A 290-amino-acid polypeptide reads, in one-letter code: Porphobilinogen deaminase (290 aa).

Cys238 carries the S-(dipyrrolylmethanemethyl)cysteine modification.

Belongs to the HMBS family. In terms of assembly, monomer. Dipyrromethane is required as a cofactor.

It catalyses the reaction 4 porphobilinogen + H2O = hydroxymethylbilane + 4 NH4(+). It functions in the pathway porphyrin-containing compound metabolism; protoporphyrin-IX biosynthesis; coproporphyrinogen-III from 5-aminolevulinate: step 2/4. In terms of biological role, tetrapolymerization of the monopyrrole PBG into the hydroxymethylbilane pre-uroporphyrinogen in several discrete steps. This chain is Porphobilinogen deaminase, found in Caldicellulosiruptor saccharolyticus (strain ATCC 43494 / DSM 8903 / Tp8T 6331).